Reading from the N-terminus, the 451-residue chain is Secreted RxLR effector protein 70 (451 aa).

The signal sequence occupies residues 1–17 (MRGAYYIITALLVVASS). Residues 48 to 65 (RFLRESRDVHDDLANEER) carry the RxLR-dEER motif. The interval 303 to 336 (DAPSNSKHTLGGNKDSSSATTLHKHSKGLSSRPF) is disordered. Residues 305 to 323 (PSNSKHTLGGNKDSSSATT) show a composition bias toward polar residues.

It belongs to the RxLR effector family.

The protein localises to the secreted. The protein resides in the host nucleus. In terms of biological role, secreted effector that completely suppresses the host cell death induced by cell death-inducing proteins. The chain is Secreted RxLR effector protein 70 from Plasmopara viticola (Downy mildew of grapevine).